A 96-amino-acid chain; its full sequence is UPF0251 protein Spea_3639 (96 aa).

It belongs to the UPF0251 family.

This is UPF0251 protein Spea_3639 from Shewanella pealeana (strain ATCC 700345 / ANG-SQ1).